Consider the following 1607-residue polypeptide: Laminin subunit gamma-1 (1607 aa).

Positions 1–33 (MTGGGRAALALQPRGRLWPLLAVLAAVAGCVRA) are cleaved as a signal peptide. A Laminin N-terminal domain is found at 44–283 (RPQRCMPEFV…AISDFAVGGR (240 aa)). N-linked (GlcNAc...) asparagine glycosylation is found at N58 and N132. 15 disulfide bridges follow: C284/C293, C286/C303, C305/C314, C340/C349, C342/C365, C368/C377, C380/C393, C396/C408, C398/C414, C416/C425, C428/C440, C443/C454, C445/C461, C463/C472, and C475/C490. Laminin EGF-like domains are found at residues 284-339 (CKCN…ESLP), 340-395 (CDCN…ACSP), 396-442 (CHCS…GCRP), and 443-492 (CSCD…GCTP). The Laminin EGF-like 5; first part domain occupies 493-502 (CFCFGHSSVC). Residues 512–687 (DISSTFQIDE…PGVPATWVES (176 aa)) form the Laminin IV type A domain. 2 N-linked (GlcNAc...) asparagine glycosylation sites follow: N574 and N648. The region spanning 688 to 721 (CTCPVGYGGQFCETCLPGYRRETPSLGPYSPCVL) is the Laminin EGF-like 5; second part domain. Cystine bridges form between C722–C731, C724–C738, C740–C749, C752–C768, C771–C779, C773–C790, C793–C802, C805–C823, C826–C840, C828–C847, C850–C859, C862–C879, C882–C896, C884–C903, C905–C914, C917–C930, C933–C945, C935–C952, C954–C963, C966–C978, C981–C993, C983–C999, C1001–C1010, and C1013–C1026. Laminin EGF-like domains are found at residues 722–770 (CTCN…DCQP) and 771–825 (CPCP…LCRP). Positions 826–881 (CQCNDNIDPNAVGNCNRLTGECLKCIYNTAGFYCDRCKEGFFGNPLAPNPADKCKA) constitute a Laminin EGF-like 8; nidogen-binding domain. Laminin EGF-like domains follow at residues 882–932 (CACN…GCER), 933–980 (CDCH…GCKP), and 981–1028 (CDCH…GCQE). 2 N-linked (GlcNAc...) asparagine glycosylation sites follow: N1020 and N1105. Positions 1029 to 1607 (CPACYRLVKD…CFNTPSIEKP (579 aa)) are domain II and I. A coiled-coil region spans residues 1034–1594 (RLVKDKAAEH…HNLEDIKKTL (561 aa)). S1147 is modified (phosphoserine). N-linked (GlcNAc...) asparagine glycans are attached at residues N1159, N1173, N1203, N1221, N1239, N1378, N1393, and N1437. Position 1491 is a phosphoserine (S1491).

As to quaternary structure, laminin is a complex glycoprotein, consisting of three different polypeptide chains (alpha, beta, gamma), which are bound to each other by disulfide bonds into a cross-shaped molecule comprising one long and three short arms with globules at each end. Gamma-1 is a subunit of laminin-1 (laminin-111 or EHS laminin), laminin-2 (laminin-211 or merosin), laminin-3 (laminin-121 or S-laminin), laminin-4 (laminin-221 or S-merosin), laminin-6 (laminin-311 or K-laminin), laminin-7 (laminin-321 or KS-laminin), laminin-8 (laminin-411), laminin-9 (laminin-421), laminin-10 (laminin-511) and laminin-11 (laminin-521). Interacts with SVEP1. In terms of tissue distribution, found in the basement membranes (major component).

Its subcellular location is the secreted. It is found in the extracellular space. The protein localises to the extracellular matrix. It localises to the basement membrane. In terms of biological role, binding to cells via a high affinity receptor, laminin is thought to mediate the attachment, migration and organization of cells into tissues during embryonic development by interacting with other extracellular matrix components. This Mus musculus (Mouse) protein is Laminin subunit gamma-1 (Lamc1).